The following is a 260-amino-acid chain: Thiazole synthase (260 aa).

The Schiff-base intermediate with DXP role is filled by Lys102. Residues Gly163, 189–190, and 211–212 contribute to the 1-deoxy-D-xylulose 5-phosphate site; these read AG and NT.

This sequence belongs to the ThiG family. In terms of assembly, homotetramer. Forms heterodimers with either ThiH or ThiS.

Its subcellular location is the cytoplasm. The catalysed reaction is [ThiS sulfur-carrier protein]-C-terminal-Gly-aminoethanethioate + 2-iminoacetate + 1-deoxy-D-xylulose 5-phosphate = [ThiS sulfur-carrier protein]-C-terminal Gly-Gly + 2-[(2R,5Z)-2-carboxy-4-methylthiazol-5(2H)-ylidene]ethyl phosphate + 2 H2O + H(+). It functions in the pathway cofactor biosynthesis; thiamine diphosphate biosynthesis. Its function is as follows. Catalyzes the rearrangement of 1-deoxy-D-xylulose 5-phosphate (DXP) to produce the thiazole phosphate moiety of thiamine. Sulfur is provided by the thiocarboxylate moiety of the carrier protein ThiS. In vitro, sulfur can be provided by H(2)S. In Geotalea uraniireducens (strain Rf4) (Geobacter uraniireducens), this protein is Thiazole synthase.